The following is a 205-amino-acid chain: N-(5'-phosphoribosyl)anthranilate isomerase (205 aa).

Belongs to the TrpF family.

It carries out the reaction N-(5-phospho-beta-D-ribosyl)anthranilate = 1-(2-carboxyphenylamino)-1-deoxy-D-ribulose 5-phosphate. Its pathway is amino-acid biosynthesis; L-tryptophan biosynthesis; L-tryptophan from chorismate: step 3/5. In Phocaeicola vulgatus (strain ATCC 8482 / DSM 1447 / JCM 5826 / CCUG 4940 / NBRC 14291 / NCTC 11154) (Bacteroides vulgatus), this protein is N-(5'-phosphoribosyl)anthranilate isomerase.